The following is a 221-amino-acid chain: Large ribosomal subunit protein bL25 (221 aa).

The tract at residues 174 to 221 (SVVTVVPPTDEPTEEEVEAMEGEAATEEPEVVGEEKEEDSEEENKDEE) is disordered. Positions 184–221 (EPTEEEVEAMEGEAATEEPEVVGEEKEEDSEEENKDEE) are enriched in acidic residues.

Belongs to the bacterial ribosomal protein bL25 family. CTC subfamily. In terms of assembly, part of the 50S ribosomal subunit; part of the 5S rRNA/L5/L18/L25 subcomplex. Contacts the 5S rRNA. Binds to the 5S rRNA independently of L5 and L18.

This is one of the proteins that binds to the 5S RNA in the ribosome where it forms part of the central protuberance. The polypeptide is Large ribosomal subunit protein bL25 (Staphylococcus haemolyticus (strain JCSC1435)).